Consider the following 46-residue polypeptide: Protein PsbN (46 aa).

Residues 10–30 (VSIAVLTALLGLTGFGIYTAF) traverse the membrane as a helical segment.

This sequence belongs to the PsbN family.

The protein localises to the cellular thylakoid membrane. In terms of biological role, may play a role in photosystem I and II biogenesis. In Synechococcus sp. (strain RCC307), this protein is Protein PsbN.